The sequence spans 289 residues: Protoheme IX farnesyltransferase (289 aa).

9 consecutive transmembrane segments (helical) span residues 18–38 (VTSL…EQSP), 40–60 (GFLI…SFIF), 87–107 (VVQA…VLAV), 111–131 (LLTA…YTIF), 139–159 (NIVI…AAIG), 168–188 (SLFM…AIFL), 212–232 (SIFF…FLES), 234–254 (MGFL…ILSY), and 269–289 (FFFS…DHLI).

The protein belongs to the UbiA prenyltransferase family. Protoheme IX farnesyltransferase subfamily.

Its subcellular location is the cell inner membrane. It catalyses the reaction heme b + (2E,6E)-farnesyl diphosphate + H2O = Fe(II)-heme o + diphosphate. The protein operates within porphyrin-containing compound metabolism; heme O biosynthesis; heme O from protoheme: step 1/1. Functionally, converts heme B (protoheme IX) to heme O by substitution of the vinyl group on carbon 2 of heme B porphyrin ring with a hydroxyethyl farnesyl side group. The polypeptide is Protoheme IX farnesyltransferase (Leptospira interrogans serogroup Icterohaemorrhagiae serovar copenhageni (strain Fiocruz L1-130)).